The sequence spans 342 residues: Flavanone 3-dioxygenase 2 (342 aa).

One can recognise a Fe2OG dioxygenase domain in the interval Gln193–Pro293. Residues His217, Asp219, and His274 each coordinate Fe cation. Arg284 serves as a coordination point for 2-oxoglutarate.

It belongs to the iron/ascorbate-dependent oxidoreductase family. The cofactor is Fe(2+). It depends on L-ascorbate as a cofactor. In terms of tissue distribution, expressed in roots, leaves and stems. Expressed at low levels in seeds.

It catalyses the reaction a (2S)-flavan-4-one + 2-oxoglutarate + O2 = a (2R,3R)-dihydroflavonol + succinate + CO2. Its pathway is secondary metabolite biosynthesis; flavonoid biosynthesis. Its function is as follows. Catalyzes the 3-beta-hydroxylation of 2S-flavanones to 2R,3R-dihydroflavonols which are intermediates in the biosynthesis of flavonols, anthocyanidins, catechins and proanthocyanidins in plants. Converts (2S)-eriodictyol to (+)-taxifolin and (2S)-naringenin to (+)-(2R/3R)-dihydrokaempferol in vitro. This Oryza sativa subsp. japonica (Rice) protein is Flavanone 3-dioxygenase 2.